The primary structure comprises 335 residues: UPF0104 membrane protein PH1989 (335 aa).

The next 8 membrane-spanning stretches (helical) occupy residues 4–24 (YLLIIIGVTLVLILLWWAGIE), 34–54 (DIRFILLAILMYCISVLIWAV), 62–82 (GANINVSFVKVIEGVFIGIFL), 122–142 (ILDVIPVVVFMMLAFLYALTI), 148–168 (LIILGISAIILVIILLMTTVF), 231–251 (LYSFILWGADILKTYFIFLSL), 266–286 (ASIAVAMISVIPGGIGITEVV), and 304–324 (VTMLDRLISFWIPTLLGGILV).

Belongs to the UPF0104 family.

It is found in the cell membrane. In Pyrococcus horikoshii (strain ATCC 700860 / DSM 12428 / JCM 9974 / NBRC 100139 / OT-3), this protein is UPF0104 membrane protein PH1989.